Consider the following 109-residue polypeptide: Nucleoid-associated protein LGAS_0369 (109 aa).

This sequence belongs to the YbaB/EbfC family. In terms of assembly, homodimer.

The protein localises to the cytoplasm. Its subcellular location is the nucleoid. In terms of biological role, binds to DNA and alters its conformation. May be involved in regulation of gene expression, nucleoid organization and DNA protection. The chain is Nucleoid-associated protein LGAS_0369 from Lactobacillus gasseri (strain ATCC 33323 / DSM 20243 / BCRC 14619 / CIP 102991 / JCM 1131 / KCTC 3163 / NCIMB 11718 / NCTC 13722 / AM63).